We begin with the raw amino-acid sequence, 37 residues long: Large ribosomal subunit protein bL36 (37 aa).

The protein belongs to the bacterial ribosomal protein bL36 family.

The chain is Large ribosomal subunit protein bL36 from Desulforudis audaxviator (strain MP104C).